The following is a 141-amino-acid chain: Nucleoside diphosphate kinase (141 aa).

6 residues coordinate ATP: Lys11, Phe59, Arg87, Thr93, Arg104, and Asn114. The active-site Pros-phosphohistidine intermediate is the His117.

It belongs to the NDK family. Homotetramer. It depends on Mg(2+) as a cofactor.

It is found in the cytoplasm. It carries out the reaction a 2'-deoxyribonucleoside 5'-diphosphate + ATP = a 2'-deoxyribonucleoside 5'-triphosphate + ADP. The enzyme catalyses a ribonucleoside 5'-diphosphate + ATP = a ribonucleoside 5'-triphosphate + ADP. Its function is as follows. Major role in the synthesis of nucleoside triphosphates other than ATP. The ATP gamma phosphate is transferred to the NDP beta phosphate via a ping-pong mechanism, using a phosphorylated active-site intermediate. The sequence is that of Nucleoside diphosphate kinase from Burkholderia cenocepacia (strain HI2424).